The following is a 162-amino-acid chain: uncharacterized protein (162 aa).

Pentapeptide repeat domains lie at 33-72 (ASLIGAQLIFVDLGGANLTRAQLDSATLKNANLALANMTE), 73-112 (VCLIYADLSNADLSGANLVGADLTNADLSGAKLGGADLRK), and 113-152 (ANLSEASLRGADLRGVNLIEANLTNTDFSEADLTGAYISD).

This is an uncharacterized protein from Synechocystis sp. (strain ATCC 27184 / PCC 6803 / Kazusa).